We begin with the raw amino-acid sequence, 203 residues long: UPF0637 protein SSP1683 (203 aa).

Belongs to the UPF0637 family.

The protein is UPF0637 protein SSP1683 of Staphylococcus saprophyticus subsp. saprophyticus (strain ATCC 15305 / DSM 20229 / NCIMB 8711 / NCTC 7292 / S-41).